Consider the following 123-residue polypeptide: Small ribosomal subunit protein uS12 (123 aa).

Asp89 carries the post-translational modification 3-methylthioaspartic acid.

Belongs to the universal ribosomal protein uS12 family. In terms of assembly, part of the 30S ribosomal subunit. Contacts proteins S8 and S17. May interact with IF1 in the 30S initiation complex.

In terms of biological role, with S4 and S5 plays an important role in translational accuracy. Interacts with and stabilizes bases of the 16S rRNA that are involved in tRNA selection in the A site and with the mRNA backbone. Located at the interface of the 30S and 50S subunits, it traverses the body of the 30S subunit contacting proteins on the other side and probably holding the rRNA structure together. The combined cluster of proteins S8, S12 and S17 appears to hold together the shoulder and platform of the 30S subunit. This is Small ribosomal subunit protein uS12 from Methylorubrum extorquens (strain PA1) (Methylobacterium extorquens).